Consider the following 359-residue polypeptide: ELAV-like protein 2 (359 aa).

The segment at 1–39 is disordered; sequence METQLSNGPTCNNTANGPTTVNNNCSSPVDSGNTEDSKT. 2 RRM domains span residues 39 to 117 and 125 to 205; these read TNLI…YARP and ANLY…FANN. At Ser-221 the chain carries Phosphoserine. The RRM 3 domain occupies 276-354; it reads WCIFVYNLAP…RVLQVSFKTN (79 aa).

Belongs to the RRM elav family. In terms of assembly, interacts with IGF2BP1. Interacts with MAP1B light chain LC1.

RNA-binding protein that binds to the 3' untranslated region (3'UTR) of target mRNAs. Seems to recognize a GAAA motif. Can bind to its own 3'UTR, the FOS 3'UTR and the ID 3'UTR. The sequence is that of ELAV-like protein 2 (Elavl2) from Rattus norvegicus (Rat).